Reading from the N-terminus, the 462-residue chain is Argininosuccinate lyase (462 aa).

The protein belongs to the lyase 1 family. Argininosuccinate lyase subfamily.

The protein localises to the cytoplasm. It catalyses the reaction 2-(N(omega)-L-arginino)succinate = fumarate + L-arginine. Its pathway is amino-acid biosynthesis; L-arginine biosynthesis; L-arginine from L-ornithine and carbamoyl phosphate: step 3/3. This is Argininosuccinate lyase from Bacillus thuringiensis (strain Al Hakam).